A 237-amino-acid chain; its full sequence is Adenosine 5'-phosphosulfate reductase (237 aa).

Residues Cys123, Cys124, Cys206, and Cys209 each coordinate [4Fe-4S] cluster. Cys232 (nucleophile; cysteine thiosulfonate intermediate) is an active-site residue.

The protein belongs to the PAPS reductase family. CysH subfamily. Requires [4Fe-4S] cluster as cofactor.

It localises to the cytoplasm. The catalysed reaction is [thioredoxin]-disulfide + sulfite + AMP + 2 H(+) = adenosine 5'-phosphosulfate + [thioredoxin]-dithiol. It functions in the pathway sulfur metabolism; hydrogen sulfide biosynthesis; sulfite from sulfate. In terms of biological role, catalyzes the formation of sulfite from adenosine 5'-phosphosulfate (APS) using thioredoxin as an electron donor. The protein is Adenosine 5'-phosphosulfate reductase of Mycobacteroides abscessus (strain ATCC 19977 / DSM 44196 / CCUG 20993 / CIP 104536 / JCM 13569 / NCTC 13031 / TMC 1543 / L948) (Mycobacterium abscessus).